A 147-amino-acid polypeptide reads, in one-letter code: Cyanate hydratase (147 aa).

Residues Arg88, Glu91, and Ser114 contribute to the active site.

It belongs to the cyanase family.

It catalyses the reaction cyanate + hydrogencarbonate + 3 H(+) = NH4(+) + 2 CO2. Its function is as follows. Catalyzes the reaction of cyanate with bicarbonate to produce ammonia and carbon dioxide. This is Cyanate hydratase from Polaromonas sp. (strain JS666 / ATCC BAA-500).